Consider the following 453-residue polypeptide: tRNA modification GTPase MnmE (453 aa).

Residues Arg22, Glu79, and Lys119 each coordinate (6S)-5-formyl-5,6,7,8-tetrahydrofolate. Residues 215–376 (GMKVVIAGRP…LKQHLKSLMG (162 aa)) enclose the TrmE-type G domain. Asn225 contacts K(+). Residues 225–230 (NAGKSS), 244–250 (TEIAGTT), 269–272 (DTAG), and 334–337 (NKAD) contribute to the GTP site. A Mg(2+)-binding site is contributed by Ser229. K(+) is bound by residues Thr244, Ile246, and Thr249. Thr250 is a binding site for Mg(2+). Residue Lys453 coordinates (6S)-5-formyl-5,6,7,8-tetrahydrofolate.

Belongs to the TRAFAC class TrmE-Era-EngA-EngB-Septin-like GTPase superfamily. TrmE GTPase family. In terms of assembly, homodimer. Heterotetramer of two MnmE and two MnmG subunits. K(+) serves as cofactor.

Its subcellular location is the cytoplasm. Its function is as follows. Exhibits a very high intrinsic GTPase hydrolysis rate. Involved in the addition of a carboxymethylaminomethyl (cmnm) group at the wobble position (U34) of certain tRNAs, forming tRNA-cmnm(5)s(2)U34. This is tRNA modification GTPase MnmE from Shewanella oneidensis (strain ATCC 700550 / JCM 31522 / CIP 106686 / LMG 19005 / NCIMB 14063 / MR-1).